The chain runs to 392 residues: Succinate--CoA ligase [ADP-forming] subunit beta (392 aa).

One can recognise an ATP-grasp domain in the interval 9–248; sequence KEILRGFGVT…TSEEDPLEVE (240 aa). ATP contacts are provided by residues Lys-50, 57-59, Glu-103, Met-106, and Glu-111; that span reads GRG. Mg(2+) is bound by residues Asn-203 and Asp-217. Substrate-binding positions include Asn-268 and 325–327; that span reads GIV.

Belongs to the succinate/malate CoA ligase beta subunit family. In terms of assembly, heterotetramer of two alpha and two beta subunits. The cofactor is Mg(2+).

The catalysed reaction is succinate + ATP + CoA = succinyl-CoA + ADP + phosphate. It catalyses the reaction GTP + succinate + CoA = succinyl-CoA + GDP + phosphate. Its pathway is carbohydrate metabolism; tricarboxylic acid cycle; succinate from succinyl-CoA (ligase route): step 1/1. In terms of biological role, succinyl-CoA synthetase functions in the citric acid cycle (TCA), coupling the hydrolysis of succinyl-CoA to the synthesis of either ATP or GTP and thus represents the only step of substrate-level phosphorylation in the TCA. The beta subunit provides nucleotide specificity of the enzyme and binds the substrate succinate, while the binding sites for coenzyme A and phosphate are found in the alpha subunit. The protein is Succinate--CoA ligase [ADP-forming] subunit beta of Chloroherpeton thalassium (strain ATCC 35110 / GB-78).